Reading from the N-terminus, the 1475-residue chain is MSNSIGRNVLHQSLLCSTVFEHQSNRHSSGIPANSLFQAVSINQPAGASAARKSPLSTKFYGTSLNARPKMAMGRHRPVLITPRAVLAVDSASELAGKFNLEGNVELQITVGAPTPGSLTQVNIEISYSSNSLLLHWGAIRDKKEKWVLPSRPPDGTKILKNRALRTPFVSSGSKSLVKLEIDDPAIEAVEFLILDEAQNKWFKNNGANFHVKLPSERSLIQNVSVPEDLVQTQAYLRWERKGKQIYTPEQEKEEYEAARTELLEEIVRGTSVEDLRAKLTNKNDRQEIKESSSHGTKNAIPDDLVQIQSYIRWERAGKPNYSADQQLREFEEARKELQSELEKGISLDEIWKKITKGEIQTKVSDQLKTKKYFRTERIQRKQRDFMQILNKHVAEPTEKKNISVEPKALTPVELFVGATEEQEGDSILNKKIYKLAGKELLVLVHKPGGKTKIHLATDGKEPLILHWALSKKAGEWLAPPPSVLPAGSVLLSGSVETTFTTSSLADLPYQVQSIEIEIEEEGYVGMPSVLQSGGNWIKNKGSDFYVDFSYESKQVQQDFGDGKGTAKALLEKIAGLEIEAQKSFMHRFNIAADLIQEAKEAGELGFAGILVWMRFMATRQLIWNKNYNVKPREISKAQDRLTDLLQNVYISNPEYREIVRMILSTVGRGGEGDVGQRIRDEILVIQRNNNCKGGMMEEWHQKLHNNTSPDDVIICQALIDYIKSDFDISAYWKTLNDNGITKERLLSYDRAIHSEPNFRRDQKDGLLRDLGNYMRTLKAVHSGADLESAITNCLGYRSEGQGFMVGVQINPIPNLPSGFPELLQFVSEHVEDRNVEALLEGLLEARQEIRPLLCKHNDRLKDLLFLDIALESSVRTAIEKGYEELNEAGPEKIMYFVSLILENLALSLDDNEDLIYCLKGWSNALSMSKSKSDNWALFAKSVLDRTRLALAGKADWYQKVLQPSAEYLGTLLSVDKWAVDIFTEEMIRAGSAAALSLLLNRLDPVLRKTASLGSWQVISPVEVFGYVAVVDELLAVQDKSYDQPTILLARRVKGEEEIPHGTVAVLTADMPDVLSHVSVRARNCKVCFATCFDPNILADLQSNEGKMLHLKPTSADIAYSVVEGSELQDSSSANLKEEDGPSSSVALVKKQFAGRYAITSDEFTGELVGAKSRNIAYLKGKVPSWIGIPTSVALPFGVFEKVLSDDINQAVAEKLQILKQKLGEEDHSALREIRETVLQMKAPNQLVQELKTEMKSSGMPWPGDEGEQRWEQAWMAIKKVWASKWNERAFFSTRRVKLDHEYLCMAVLVQEIINADYAFVIHTTNPSSGDSSEIYAEVVKGLGETLVGAYPGRALSFVCKKNDLKSPRVLGYPSKPIGLFIRRSIIFRSDSNGEDLEGYAGAGLYDSVPMDEAEKVVLDYSSDHLITDGHFQQSILSSIARAGCEIEELFGSAQDIEGVVRDGKIYVVQTRPQM.

Residues 1 to 85 (MSNSIGRNVL…HRPVLITPRA (85 aa)) constitute a chloroplast transit peptide. The active-site Tele-phosphohistidine intermediate is the H1077.

The protein belongs to the PEP-utilizing enzyme family. As to quaternary structure, homodimer. Mg(2+) is required as a cofactor.

The protein localises to the plastid. It localises to the chloroplast. It catalyses the reaction [(1-&gt;4)-alpha-D-glucosyl](n) + n ATP + n H2O = [(1-&gt;4)-6-phospho-alpha-D-glucosyl](n) + n AMP + n phosphate + 2n H(+). Functionally, mediates the incorporation of phosphate into starch-like alpha-glucan, mostly at the C-6 position of glucose units. Acts as an overall regulator of starch mobilization. Required for starch degradation, suggesting that the phosphate content of starch regulates its degradability. The sequence is that of Alpha-glucan water dikinase, chloroplastic (R1) from Citrus reticulata (Tangerine).